The following is a 356-amino-acid chain: Palmitoyltransferase swf1 (356 aa).

The Lumenal segment spans residues 1 to 2 (MD). The helical transmembrane segment at 3 to 23 (FFYKYLALVAIASLMVFILLF) threads the bilayer. Residues 24–78 (GQIPKLKYTVIGKLNRFFMVTIPYHLHVLDSRYADGRCSAAMRSLSNYVLYKNNP) lie on the Cytoplasmic side of the membrane. A helical membrane pass occupies residues 79–99 (LVVFLYLALITIGIASFFIYG). The Lumenal segment spans residues 100–107 (SSLTQKFS). The chain crosses the membrane as a helical span at residues 108 to 128 (IIDWISVLTSVLLPYISLYIA). The Cytoplasmic segment spans residues 129–201 (AKSNPGKIDL…NNCVGLNNAR (73 aa)). The DHHC domain maps to 158 to 208 (NKCSTCKFEKPARSKHCRLCNICVEKFDHHCIWINNCVGLNNARYFFLFLL). The helical transmembrane segment at 202 to 222 (YFFLFLLCTIQLLFHSILRLG) threads the bilayer. The Lumenal segment spans residues 223-253 (YHFNALRDMRQYPSFLRSWWFAIKSEGELGS). The chain crosses the membrane as a helical span at residues 254–274 (VFLISLICSVLVLCLLGYEFF). The Cytoplasmic portion of the chain corresponds to 275–356 (LVYAGYTTNE…FPYRHLYSTT (82 aa)).

The protein belongs to the DHHC palmitoyltransferase family. SWF1 subfamily.

The protein resides in the endoplasmic reticulum membrane. The enzyme catalyses L-cysteinyl-[protein] + hexadecanoyl-CoA = S-hexadecanoyl-L-cysteinyl-[protein] + CoA. In terms of biological role, palmitoyltransferase that targets several endosomal SNAREs. Palmitoylates the SNAREs at cysteine residues close to the cytoplasmic end of their transmembrane domain. May have a role in the cellular quality control of transmembrane domain-containing proteins. This chain is Palmitoyltransferase swf1 (swf1), found in Schizosaccharomyces pombe (strain 972 / ATCC 24843) (Fission yeast).